The chain runs to 145 residues: 3-hydroxyacyl-[acyl-carrier-protein] dehydratase FabZ (145 aa).

Residue His48 is part of the active site.

It belongs to the thioester dehydratase family. FabZ subfamily.

It is found in the cytoplasm. It catalyses the reaction a (3R)-hydroxyacyl-[ACP] = a (2E)-enoyl-[ACP] + H2O. In terms of biological role, involved in unsaturated fatty acids biosynthesis. Catalyzes the dehydration of short chain beta-hydroxyacyl-ACPs and long chain saturated and unsaturated beta-hydroxyacyl-ACPs. This Geobacillus sp. (strain WCH70) protein is 3-hydroxyacyl-[acyl-carrier-protein] dehydratase FabZ.